A 387-amino-acid chain; its full sequence is 3-ketoacyl-CoA thiolase (387 aa).

The active-site Acyl-thioester intermediate is Cys-91. Active-site proton acceptor residues include His-343 and Cys-373.

The protein belongs to the thiolase-like superfamily. Thiolase family. Heterotetramer of two alpha chains (FadB) and two beta chains (FadA).

Its subcellular location is the cytoplasm. It carries out the reaction an acyl-CoA + acetyl-CoA = a 3-oxoacyl-CoA + CoA. The protein operates within lipid metabolism; fatty acid beta-oxidation. Catalyzes the final step of fatty acid oxidation in which acetyl-CoA is released and the CoA ester of a fatty acid two carbons shorter is formed. This chain is 3-ketoacyl-CoA thiolase, found in Idiomarina loihiensis (strain ATCC BAA-735 / DSM 15497 / L2-TR).